The primary structure comprises 152 residues: Acidic phospholipase A2 1 (152 aa).

Residues 1–19 (MNPAYFLVLAAVCVSLLGA) form the signal peptide. Residues 20 to 27 (ANIPPQPL) constitute a propeptide that is removed on maturation. 7 cysteine pairs are disulfide-bonded: C38/C104, C54/C151, C56/C72, C71/C132, C78/C125, C88/C118, and C111/C123. 3 residues coordinate Ca(2+): Y55, G57, and G59. Residue H75 is part of the active site. D76 lines the Ca(2+) pocket. The active site involves D126.

It belongs to the phospholipase A2 family. Group I subfamily. D49 sub-subfamily. Ca(2+) serves as cofactor. Expressed by the venom gland.

The protein resides in the secreted. The enzyme catalyses a 1,2-diacyl-sn-glycero-3-phosphocholine + H2O = a 1-acyl-sn-glycero-3-phosphocholine + a fatty acid + H(+). Functionally, PLA2 catalyzes the calcium-dependent hydrolysis of the 2-acyl groups in 3-sn-phosphoglycerides. The sequence is that of Acidic phospholipase A2 1 from Bungarus candidus (Malayan krait).